The sequence spans 567 residues: Phenylalanine ammonia-lyase (567 aa).

Catalysis depends on Tyr78, which acts as the Proton donor/acceptor. Positions 167–169 form a cross-link, 5-imidazolinone (Ala-Gly); that stretch reads ASG. At Ser168 the chain carries 2,3-didehydroalanine (Ser). The (E)-cinnamate site is built by Asn223, Gln311, Arg317, Asn347, Lys419, Glu448, and Asn451.

Belongs to the PAL/histidase family. Homotetramer. Contains an active site 4-methylidene-imidazol-5-one (MIO), which is formed autocatalytically by cyclization and dehydration of residues Ala-Ser-Gly.

It localises to the cytoplasm. The enzyme catalyses L-phenylalanine = (E)-cinnamate + NH4(+). It functions in the pathway phenylpropanoid metabolism; trans-cinnamate biosynthesis; trans-cinnamate from L-phenylalanine: step 1/1. Its function is as follows. Catalyzes the non-oxidative deamination of L-phenylalanine to form trans-cinnamic acid, the first step in the phenylpropanoid pathway. In Trichormus variabilis (strain ATCC 29413 / PCC 7937) (Anabaena variabilis), this protein is Phenylalanine ammonia-lyase.